The sequence spans 235 residues: Auracyanin-B (235 aa).

The segment covering 1–21 (MSWRGSGRSNFRSRSSSNGGS) has biased composition (low complexity). Disordered regions lie at residues 1–27 (MSWR…SGGS) and 64–107 (ATPR…NVVN). An N-terminal signal peptide occupies residues 1 to 56 (MSWRGSGRSNFRSRSSSNGGSTFSGGSAGGPPLIVMMGLAFGAGLIMLIVMIASNA). Residues 57–80 (TAGGFVAATPRPTATPRPTAAPAP) constitute a propeptide that is removed on maturation. Pro residues predominate over residues 69–86 (TATPRPTAAPAPTQPPAA). The span at 87-100 (QPTTAPATQAANAP) shows a compositional bias: low complexity. One can recognise a Plastocyanin-like domain in the interval 111–235 (AQTVEVRAAP…GMKGTLTVTP (125 aa)). Cu cation contacts are provided by H152, C217, H222, and M227.

It belongs to the multicopper oxidase family. It depends on Cu cation as a cofactor. Glycosylated.

The protein resides in the cell membrane. Probably a soluble electron acceptor for the integral membrane protein electron transfer alternative complex III (ACIII). In Chloroflexus aurantiacus (strain ATCC 29366 / DSM 635 / J-10-fl), this protein is Auracyanin-B.